The chain runs to 239 residues: MSGGYDLNLFASPPDCKFLCSVCHGVLKRPTRLPCSHIFCKKCIFRWLARQNTCPCCRKEVTRRKMVEVNKLRKTIGRLQVKCKNAAAGCLDTHPLAHRKEHQDSCPFELMACPNEGCTVQVLRGVLDEHRQHCQQNGQQRCPLGCGSTLAALEGEHHNCYRELRDAWVQRHERNRTLLLGLLGRVRRVHLTTSIIHQQLAQLSNFLEDDDNLLLNAQVQETEVTPEAEMRGTQGQSVL.

The RING-type zinc-finger motif lies at 20–58 (CSVCHGVLKRPTRLPCSHIFCKKCIFRWLARQNTCPCCR). The TRAF-type zinc finger occupies 101–156 (EHQDSCPFELMACPNEGCTVQVLRGVLDEHRQHCQQNGQQRCPLGCGSTLAALEGE).

As to quaternary structure, interacts with DTNBP1. Expressed in testis. Expressed in round spermatids of the stages VII-VIII semniniferous tubules. Expressed in elongating spermatids of stages VIII-IX seminiferous tubules (at protein level).

Its subcellular location is the cytoplasm. It localises to the nucleus. Its function is as follows. May be involved in acrosome formation of spermatids. This chain is RING finger protein 151 (Rnf151), found in Mus musculus (Mouse).